A 155-amino-acid polypeptide reads, in one-letter code: Small ribosomal subunit protein uS9 (155 aa).

This sequence belongs to the universal ribosomal protein uS9 family.

This is Small ribosomal subunit protein uS9 from Sinorhizobium medicae (strain WSM419) (Ensifer medicae).